A 554-amino-acid polypeptide reads, in one-letter code: (S)-1-hydroxy-N-methylcanadine 13-hydroxylase CYP82X2 (554 aa).

The helical transmembrane segment at isoleucine 23–isoleucine 43 threads the bilayer. Cysteine 494 contacts heme.

The protein belongs to the cytochrome P450 family. Heme serves as cofactor. Highly expressed in capsules. Expressed is stems.

It is found in the membrane. The enzyme catalyses (S)-1-hydroxy-N-methylcanadine + reduced [NADPH--hemoprotein reductase] + O2 = (13S,14R)-1,13-dihydroxy-N-methylcanadine + oxidized [NADPH--hemoprotein reductase] + H2O + H(+). The protein operates within alkaloid biosynthesis. Cytochrome P450 involved in the biosynthesis of the benzylisoquinoline alkaloid noscapine. Converts (S)-1-hydroxy-N-methylcanadine to (13S,14R)-1,13-dihydroxy-N-methylcanadine. The polypeptide is (S)-1-hydroxy-N-methylcanadine 13-hydroxylase CYP82X2 (Papaver somniferum (Opium poppy)).